The following is a 357-amino-acid chain: Peptide chain release factor 1 (357 aa).

Gln-236 is subject to N5-methylglutamine. The segment covering 283-309 (ERRKKDQERANNRREQIGSGDRSERIR) has biased composition (basic and acidic residues). The interval 283–313 (ERRKKDQERANNRREQIGSGDRSERIRTYNF) is disordered.

Belongs to the prokaryotic/mitochondrial release factor family. Post-translationally, methylated by PrmC. Methylation increases the termination efficiency of RF1.

It is found in the cytoplasm. In terms of biological role, peptide chain release factor 1 directs the termination of translation in response to the peptide chain termination codons UAG and UAA. The sequence is that of Peptide chain release factor 1 from Rickettsia bellii (strain OSU 85-389).